The following is a 234-amino-acid chain: Large ribosomal subunit protein bL25 (234 aa).

This sequence belongs to the bacterial ribosomal protein bL25 family. CTC subfamily. As to quaternary structure, part of the 50S ribosomal subunit; part of the 5S rRNA/L5/L18/L25 subcomplex. Contacts the 5S rRNA. Binds to the 5S rRNA independently of L5 and L18.

This is one of the proteins that binds to the 5S RNA in the ribosome where it forms part of the central protuberance. The polypeptide is Large ribosomal subunit protein bL25 (Rhodopseudomonas palustris (strain BisA53)).